Reading from the N-terminus, the 2357-residue chain is Protein transport protein Sec16A (2357 aa).

Disordered stretches follow at residues Met1–His225, Gln240–Pro347, Ser394–Thr463, Tyr504–Gln562, Asp579–Asn630, Lys666–Glu689, Thr714–Lys739, Ser778–Val820, Val917–Ala1008, Pro1023–Gln1055, and Gln1076–Arg1151. Polar residues-rich tracts occupy residues Asn57–Pro75 and Thr94–Gly104. A compositionally biased stretch (low complexity) spans Met208–Pro221. Polar residues predominate over residues Val281–Leu290. At Ser311 the chain carries Phosphoserine. The segment covering Pro333–Asn342 has biased composition (polar residues). Positions Pro540–Pro561 are enriched in low complexity. Ser581, Ser591, Ser609, Ser611, and Ser614 each carry phosphoserine. Positions Ser581 to Ser590 are enriched in polar residues. Thr615 carries the post-translational modification Phosphothreonine. At Ser617 the chain carries Phosphoserine. 3 stretches are compositionally biased toward polar residues: residues Ser921–Gln959, Phe972–Asn997, and Pro1029–Leu1041. The interval Ser1037–Gly1905 is required for localization to endoplasmic reticulum exit sites. Ser1087 carries the post-translational modification Phosphoserine. Residues Ala1118–His1415 are interaction with MIA3. The tract at residues Ser1119–Tyr1420 is required for endoplasmic reticulum localization. A compositionally biased stretch (low complexity) spans Gln1134–Val1150. The residue at position 1223 (Ser1223) is a Phosphoserine. Residues Ala1226–Gly1253 are disordered. Basic and acidic residues predominate over residues Glu1227 to Ser1238. At Ser1245 the chain carries Phosphoserine. Thr1340 is subject to Phosphothreonine. Residues Ser1342, Ser1362, Ser1365, Ser1371, Ser1374, Ser1377, Ser1384, Ser1588, and Ser1616 each carry the phosphoserine modification. Positions Asp1344–Tyr1395 are disordered. Residues Glu1348–Ala1369 show a composition bias toward basic and acidic residues. Positions Ser1371–Ser1392 are enriched in low complexity. The central conserved domain (CCD); mediates interaction with RNF183, LRRK2 and SEC13 stretch occupies residues Gln1449–Gly1905. The segment at Val1907–Ala1943 is disordered. Polar residues predominate over residues Leu1908–Val1927. Position 1922 is a phosphothreonine (Thr1922). Ser1951, Ser2043, Ser2063, Ser2077, and Ser2094 each carry phosphoserine. 3 disordered regions span residues Glu1993–Ala2141, Lys2156–Ser2198, and Pro2240–Asn2357. Residues Gly2092–Asp2105 are compositionally biased toward polar residues. Residues Ser2106–Glu2126 are compositionally biased toward basic and acidic residues. The tract at residues Glu2126 to Asn2357 is required for interaction with SEC23A. Ser2291 bears the Phosphoserine mark. The span at Gln2332–Ser2343 shows a compositional bias: polar residues.

Belongs to the SEC16 family. SEC16A and SEC16B are each present in multiple copies in a heteromeric complex. Interacts with SEC23A. Interacts with RNF183, RNF152, MIA3 and SEC13. Interacts with GORASP2 in response to ER stress. Interacts with LRRK2 (via ROC domain). Interacts with RAB10.

It localises to the endoplasmic reticulum membrane. It is found in the golgi apparatus membrane. The protein resides in the cytoplasm. Its subcellular location is the perinuclear region. The protein localises to the cytosol. It localises to the microsome membrane. Acts as a molecular scaffold that plays a key role in the organization of the endoplasmic reticulum exit sites (ERES), also known as transitional endoplasmic reticulum (tER). SAR1A-GTP-dependent assembly of SEC16A on the ER membrane forms an organized scaffold defining an ERES. Required for secretory cargo traffic from the endoplasmic reticulum to the Golgi apparatus. Mediates the recruitment of MIA3/TANGO to ERES. Regulates both conventional (ER/Golgi-dependent) and GORASP2-mediated unconventional (ER/Golgi-independent) trafficking of CFTR to cell membrane. Acts as a RAB10 effector in the regulation of insulin-induced SLC2A4/GLUT4 glucose transporter-enriched vesicles delivery to the plasma membrane in adipocytes. The sequence is that of Protein transport protein Sec16A (Sec16a) from Mus musculus (Mouse).